Consider the following 722-residue polypeptide: Polyribonucleotide nucleotidyltransferase (722 aa).

2 residues coordinate Mg(2+): Asp487 and Asp493. Residues 554-613 (PRIETFKIPTDKIREVIGTGGKVIREIVEKTGAKVNIEDDGTVKVASSDGESIKAAIKWI) form the KH domain. The region spanning 623-691 (GEIYEGTVVK…DRGKTRLSMK (69 aa)) is the S1 motif domain. Residues 691–722 (KVVDQDTGEDLEAKQKAEAKAEDEAPAQAAGE) are disordered. Residues 701 to 713 (LEAKQKAEAKAED) are compositionally biased toward basic and acidic residues.

This sequence belongs to the polyribonucleotide nucleotidyltransferase family. Requires Mg(2+) as cofactor.

Its subcellular location is the cytoplasm. It carries out the reaction RNA(n+1) + phosphate = RNA(n) + a ribonucleoside 5'-diphosphate. In terms of biological role, involved in mRNA degradation. Catalyzes the phosphorolysis of single-stranded polyribonucleotides processively in the 3'- to 5'-direction. The polypeptide is Polyribonucleotide nucleotidyltransferase (Rhodopseudomonas palustris (strain BisB5)).